Reading from the N-terminus, the 491-residue chain is Anthranilate synthase component 1 (491 aa).

L-tryptophan contacts are provided by residues Ser-49 and 271–273; that span reads PYL. 306-307 lines the chorismate pocket; it reads GT. Glu-333 serves as a coordination point for Mg(2+). Chorismate contacts are provided by residues Tyr-421, Arg-441, 455-457, and Gly-457; that span reads GAG. Glu-470 contacts Mg(2+).

Belongs to the anthranilate synthase component I family. In terms of assembly, heterotetramer consisting of two non-identical subunits: a beta subunit (TrpG) and a large alpha subunit (TrpE). Mg(2+) serves as cofactor.

The catalysed reaction is chorismate + L-glutamine = anthranilate + pyruvate + L-glutamate + H(+). The protein operates within amino-acid biosynthesis; L-tryptophan biosynthesis; L-tryptophan from chorismate: step 1/5. With respect to regulation, feedback inhibited by tryptophan. In terms of biological role, part of a heterotetrameric complex that catalyzes the two-step biosynthesis of anthranilate, an intermediate in the biosynthesis of L-tryptophan. In the first step, the glutamine-binding beta subunit (TrpG) of anthranilate synthase (AS) provides the glutamine amidotransferase activity which generates ammonia as a substrate that, along with chorismate, is used in the second step, catalyzed by the large alpha subunit of AS (TrpE) to produce anthranilate. In the absence of TrpG, TrpE can synthesize anthranilate directly from chorismate and high concentrations of ammonia. This chain is Anthranilate synthase component 1 (trpE), found in Neisseria meningitidis serogroup A / serotype 4A (strain DSM 15465 / Z2491).